Consider the following 497-residue polypeptide: Type II secretion system protein E (497 aa).

255–262 lines the ATP pocket; the sequence is GPTGSGKS. Residues cysteine 388, cysteine 391, cysteine 419, and cysteine 422 each coordinate Zn(2+).

Belongs to the GSP E family. Forms homooligomers; most probably hexamers. Interacts with PulL/GspL. It depends on Zn(2+) as a cofactor.

The protein resides in the cell inner membrane. It carries out the reaction ATP + H2O + cellular proteinSide 1 = ADP + phosphate + cellular proteinSide 2.. ATPase component of the type II secretion system required for the energy-dependent secretion of extracellular factors such as proteases and toxins from the periplasm. Acts as a molecular motor to provide the energy that is required for assembly of the pseudopilus and the extrusion of substrates generated in the cytoplasm. This chain is Type II secretion system protein E (pulE), found in Klebsiella pneumoniae.